Reading from the N-terminus, the 268-residue chain is MEFAHLTVLSLFCLAFVGITATSSEEDYWQSIWPNTPLPKTFSDLLIPSGKTNSLPIKSEELKQYSTLFFEHDLHPRKNFILGNTNSVGSIIRPFTKSRQGVTDSIWLANKEKQSFEDFCYSPTAIAEHKHCVSSLKSMIDQVISHFGSTKIKAISSNFAPYQDQYVVEDVKKVGDNAVMCHRLNFEKVVFNCHQVRETTAYVVSLVASDGTKTKALTVCHHDTRGMNPELLYEALEVTPGTVPVCHFIGNKAAAWVPNHTADNLCVM.

An N-terminal signal peptide occupies residues 1-22 (MEFAHLTVLSLFCLAFVGITAT). Tandem repeats lie at residues 50–55 (GKTNSL), 83–88 (GNTNSV), 101–106 (GVTDSI), 166–183 (YVVE…MCHR), and 202–222 (YVVS…VCHH). Residues 50-106 (GKTNSLPIKSEELKQYSTLFFEHDLHPRKNFILGNTNSVGSIIRPFTKSRQGVTDSI) are 3 X 6 AA approximate repeats. The 192-residue stretch at 68–259 (LFFEHDLHPR…GNKAAAWVPN (192 aa)) folds into the BURP domain. The 2 X approximate repeats stretch occupies residues 166–222 (YVVEDVKKVGDNAVMCHRLNFEKVVFNCHQVRETTAYVVSLVASDGTKTKALTVCHH). A glycan (N-linked (GlcNAc...) asparagine) is linked at N259.

In terms of tissue distribution, seed.

The protein is Embryonic abundant protein USP92 of Vicia faba (Broad bean).